Consider the following 340-residue polypeptide: MKRIAVLTSGGDAPGMNAAIRAVVRKAISEGMEVYGINQGYYGMVTGDIFPLDANSVGDTINRGGTFLRSARYPEFAELEGQLKGIEQLKKHGIEGVVVIGGDGSYHGAMRLTEHGFPAVGLPGTIDNDIVGTDYTIGFDTAVATAVENLDRLRDTSASHNRTFVVEVMGRNAGDIALWSGIAAGADQIIVPEEEFNIDEVVSNVRAGYAAGKHHQIIVLAEGVMSGDEFAKTMKAAGDDSDLRVTNLGHLLRGGSPTARDRVLASRMGAYAVQLLKEGRGGLAVGVHNEEMVESPILGLAEEGALFSLTDEGKIVVNNPHKADLRLAALNRDLANQSSK.

Glycine 11 contributes to the ATP binding site. 21–25 is a binding site for ADP; it reads RAVVR. ATP contacts are provided by residues 72–73 and 102–105; these read RY and GDGS. Aspartate 103 serves as a coordination point for Mg(2+). A substrate-binding site is contributed by 125–127; sequence TID. Catalysis depends on aspartate 127, which acts as the Proton acceptor. ADP is bound at residue arginine 154. Substrate contacts are provided by residues arginine 162 and 169–171; that span reads MGR. Residues 185-187 and 213-215 each bind ADP; these read GAD and KHH. Substrate is bound by residues glutamate 222, arginine 244, and 250 to 253; that span reads HLLR.

The protein belongs to the phosphofructokinase type A (PFKA) family. ATP-dependent PFK group I subfamily. Prokaryotic clade 'B1' sub-subfamily. Homotetramer. Mg(2+) is required as a cofactor.

It localises to the cytoplasm. It carries out the reaction beta-D-fructose 6-phosphate + ATP = beta-D-fructose 1,6-bisphosphate + ADP + H(+). The protein operates within carbohydrate degradation; glycolysis; D-glyceraldehyde 3-phosphate and glycerone phosphate from D-glucose: step 3/4. Allosterically activated by ADP and other diphosphonucleosides, and allosterically inhibited by phosphoenolpyruvate. Its function is as follows. Catalyzes the phosphorylation of D-fructose 6-phosphate to fructose 1,6-bisphosphate by ATP, the first committing step of glycolysis. This is ATP-dependent 6-phosphofructokinase from Streptococcus agalactiae serotype Ia (strain ATCC 27591 / A909 / CDC SS700).